The primary structure comprises 279 residues: NAD-dependent protein deacylase (279 aa).

The region spanning 20–272 (RERLRQRIFF…PEFVEKLLKG (253 aa)) is the Deacetylase sirtuin-type domain. Residue 48–67 (GAGISAESGIRTFRAADGLW) coordinates NAD(+). Tyrosine 92 and arginine 95 together coordinate substrate. NAD(+) is bound at residue 129–132 (QNID). The active-site Proton acceptor is histidine 147. 2 residues coordinate Zn(2+): cysteine 155 and cysteine 174. NAD(+)-binding positions include 214-216 (GTS), 240-242 (NLE), and alanine 258.

Belongs to the sirtuin family. Class III subfamily. As to quaternary structure, forms a 1:1 complex with acetyl-CoA synthetase (Acs). Requires Zn(2+) as cofactor.

Its subcellular location is the cytoplasm. The enzyme catalyses N(6)-acetyl-L-lysyl-[protein] + NAD(+) + H2O = 2''-O-acetyl-ADP-D-ribose + nicotinamide + L-lysyl-[protein]. The catalysed reaction is N(6)-succinyl-L-lysyl-[protein] + NAD(+) + H2O = 2''-O-succinyl-ADP-D-ribose + nicotinamide + L-lysyl-[protein]. It catalyses the reaction N(6)-(2-hydroxyisobutanoyl)-L-lysyl-[protein] + NAD(+) + H2O = 2''-O-(2-hydroxyisobutanoyl)-ADP-D-ribose + nicotinamide + L-lysyl-[protein]. With respect to regulation, deacetylation is inhibited by nicotinamide. Its function is as follows. NAD-dependent lysine deacetylase that specifically removes acetyl groups on target proteins. Also acts as a protein-lysine deacylase by mediating protein desuccinylation and de-2-hydroxyisobutyrylation. Modulates the activities of several proteins which are inactive in their acylated form. Activates the enzyme acetyl-CoA synthetase (acs) by deacetylating 'Lys-609' in the inactive, acetylated form of the enzyme. May also modulate the activity of other propionyl-adenosine monophosphate (AMP)-forming enzymes. The polypeptide is NAD-dependent protein deacylase (Escherichia coli (strain K12)).